A 209-amino-acid polypeptide reads, in one-letter code: Large ribosomal subunit protein bL25 (209 aa).

It belongs to the bacterial ribosomal protein bL25 family. CTC subfamily. Part of the 50S ribosomal subunit; part of the 5S rRNA/L5/L18/L25 subcomplex. Contacts the 5S rRNA. Binds to the 5S rRNA independently of L5 and L18.

This is one of the proteins that binds to the 5S RNA in the ribosome where it forms part of the central protuberance. The polypeptide is Large ribosomal subunit protein bL25 (Xanthomonas campestris pv. campestris (strain 8004)).